Here is an 85-residue protein sequence, read N- to C-terminus: Protein C4 (85 aa).

Residue glycine 2 is the site of N-myristoyl glycine; by host attachment. Residues 42–65 (LNPAPTSSPTSTRTETQLNGGNSR) form a disordered region. A compositionally biased stretch (low complexity) spans 44–57 (PAPTSSPTSTRTET).

Belongs to the geminiviridae protein AC4/C4 family. Interacts with Arabidopsis thaliana RCH2, ASK7/ASK-eta and ASK6/ASK-zeta. In terms of processing, phosphorylated by Arabidopsis thaliana ASK7/ASK-eta mainly on threonine and serine residues. Expressed in vascular tissues, and especially in phloem cells.

The protein localises to the host cell membrane. Major determinant of pathogenesis that affects the hyperplastic response of the host to viral infection. Mediates the induction of cell division in permissive cells, mainly in phloem. May act as a suppressor of RNA-mediated gene silencing, also known as post-transcriptional gene silencing (PTGS), a mechanism of plant viral defense that limits the accumulation of viral RNAs. The sequence is that of Protein C4 from Beet curly top virus (strain California/Logan) (BCTV).